Reading from the N-terminus, the 348-residue chain is Protein pelota homolog (348 aa).

The protein belongs to the eukaryotic release factor 1 family. Pelota subfamily. In terms of assembly, monomer. A divalent metal cation serves as cofactor.

It is found in the cytoplasm. May function in recognizing stalled ribosomes, interact with stem-loop structures in stalled mRNA molecules, and effect endonucleolytic cleavage of the mRNA. May play a role in the release non-functional ribosomes and degradation of damaged mRNAs. Has endoribonuclease activity. This is Protein pelota homolog from Methanococcus aeolicus (strain ATCC BAA-1280 / DSM 17508 / OCM 812 / Nankai-3).